The chain runs to 392 residues: Probable nucleoredoxin 3 (392 aa).

Thioredoxin domains are found at residues 17-171 and 177-326; these read LYSI…DSKR and EKLL…ELKA.

Belongs to the nucleoredoxin family.

The catalysed reaction is [protein]-dithiol + NAD(+) = [protein]-disulfide + NADH + H(+). It carries out the reaction [protein]-dithiol + NADP(+) = [protein]-disulfide + NADPH + H(+). Its function is as follows. Probable thiol-disulfide oxidoreductase that may participate in various redox reactions. This is Probable nucleoredoxin 3 from Arabidopsis thaliana (Mouse-ear cress).